A 487-amino-acid polypeptide reads, in one-letter code: MKAQPKASHFIGGAFVEDKTGKPSPVIYPATGEEIARLYSATPDVIEAAYAAALKAQGEWAALKPVERGRILRRTADILREKNKKLSKLETLDTGKALQETLVADAASAADALEFFGGIISGFNGEFVELGGSFAYTRREALGICVGIGAWNYPIQIAAWKSAPALAMGNAFIFKPSENTPLSALALAEAYKEAGLPDGLFNVVQGFGDVGAALVNHRLTAKVSLTGSVPTGKRIMAQAGEHLKHVTMELGGKSPIIVFDDADIESAIGGAMLGNFYSTGQVCSNGTRVFVHKNLRERFVERLVERTRKIRIGDPLDEATQMGPLVNRAQRDKVLSYIEKGKAEGATLACGGGVPKLQGFDKGYFIEPTIFTDVTDDMTIAREEIFGPVMSVLEFSDEDEVIARANDTEFGLAAGVFTADIARGHRVIGQIKAGTCWINAYNLTPVEVPFGGYKQSGIGRENGIAALAHYSQIKTVYVEMGKVDSPY.

The K(+) site is built by isoleucine 27 and aspartate 93. 149–151 (GAW) lines the NAD(+) pocket. Catalysis depends on lysine 161, which acts as the Charge relay system. NAD(+) contacts are provided by residues 175–178 (KPSE) and 228–231 (SVPT). Leucine 243 is a binding site for K(+). Residue glutamate 249 is the Proton acceptor of the active site. NAD(+) contacts are provided by glycine 251, cysteine 283, and glutamate 384. The active-site Nucleophile is cysteine 283. Cysteine 283 carries the post-translational modification Cysteine sulfenic acid (-SOH). 2 residues coordinate K(+): lysine 454 and glycine 457. The Charge relay system role is filled by glutamate 461.

This sequence belongs to the aldehyde dehydrogenase family. As to quaternary structure, dimer of dimers. Requires K(+) as cofactor.

The enzyme catalyses betaine aldehyde + NAD(+) + H2O = glycine betaine + NADH + 2 H(+). It functions in the pathway amine and polyamine biosynthesis; betaine biosynthesis via choline pathway; betaine from betaine aldehyde: step 1/1. Involved in the biosynthesis of the osmoprotectant glycine betaine. Catalyzes the irreversible oxidation of betaine aldehyde to the corresponding acid. The chain is Betaine aldehyde dehydrogenase from Brucella anthropi (strain ATCC 49188 / DSM 6882 / CCUG 24695 / JCM 21032 / LMG 3331 / NBRC 15819 / NCTC 12168 / Alc 37) (Ochrobactrum anthropi).